The sequence spans 302 residues: Deoxyhypusine hydroxylase (302 aa).

HEAT-like PBS-type repeat units lie at residues 23–49 (ERFR…AFDD), 54–80 (LKHE…VLKD), 87–113 (VRHE…YKKD), 175–201 (DRYR…GLKD), 206–232 (FRHE…NLED), and 239–265 (VRHE…YADD). H56, E57, H89, and E90 together coordinate Fe cation. Residues H208, E209, H241, and E242 each coordinate Fe cation.

Belongs to the deoxyhypusine hydroxylase family. Fe(2+) serves as cofactor.

It is found in the endoplasmic reticulum membrane. The enzyme catalyses [eIF5A protein]-deoxyhypusine + AH2 + O2 = [eIF5A protein]-hypusine + A + H2O. It functions in the pathway protein modification; eIF5A hypusination. Catalyzes the hydroxylation of the N(6)-(4-aminobutyl)-L-lysine intermediate to form hypusine, an essential post-translational modification only found in mature eIF-5A factor. Essential for organismal viability and plays a role in a wide number of important processes such as cell growth and proliferation, and regulates induction of autophagy and protein synthesis. Has a role in eIF-5A-mediated translational control. This is Deoxyhypusine hydroxylase from Drosophila pseudoobscura pseudoobscura (Fruit fly).